A 214-amino-acid chain; its full sequence is uncharacterized protein (214 aa).

5 consecutive transmembrane segments (helical) span residues 18–38 (LLLLCIGGFYALGVSLSNTFV), 51–71 (DLALYNLAVVTMQPLTFIVAG), 80–100 (ILVLRLGVSCLAVFFVTVLLV), 108–128 (LLVLGALLGVGYGFYWLAFNV), and 145–165 (FFGVLTSSAGMIGPIAAGYII).

The protein resides in the cell membrane. This is an uncharacterized protein from Geobacillus stearothermophilus (Bacillus stearothermophilus).